A 407-amino-acid chain; its full sequence is MASLPLGPQPHALAPPLQLHDGDALKRRPELDSDKEMSAAVIEGNDAVTGHIISTTIGGKNGEPKQTISYMAERVVGTGSFGIVFQAKCLETGESVAIKKVLQDRRYKNRELQLMRPMDHPNVISLKHCFFSTTSRDELFLNLVMEYVPETLYRVLRHYTSSNQRMPIFYVKLYTYQIFRGLAYIHTVPGVCHRDVKPQNLLVDPLTHQVKLCDFGSAKVLVKGEPNISYICSRYYRAPELIFGATEYTASIDIWSAGCVLAELLLGQPLFPGENSVDQLVEIIKVLGTPTREEIRCMNPNYTDFRFPQIKAHPWHKVFHKRMPPEAIDLASRLLQYSPSLRCTALEACAHPFFNELREPNARLPNGRPLPPLFNFKQELGGASMELINRLIPEHVRRQMSTGLQNS.

A compositionally biased stretch (low complexity) spans 1–19 (MASLPLGPQPHALAPPLQL). The interval 1-23 (MASLPLGPQPHALAPPLQLHDGD) is disordered. An N-acetylalanine modification is found at alanine 2. Residues 70–354 (YMAERVVGTG…ALEACAHPFF (285 aa)) form the Protein kinase domain. ATP is bound by residues 76 to 84 (VGTGSFGIV) and lysine 99. Aspartate 195 functions as the Proton acceptor in the catalytic mechanism. Tyrosine 230 is subject to Phosphotyrosine.

The protein belongs to the protein kinase superfamily. CMGC Ser/Thr protein kinase family. GSK-3 subfamily. As to quaternary structure, binds to KIB1. Interacts with BSK6. Autophosphorylated mainly on threonine and serine residues.

It catalyses the reaction L-seryl-[protein] + ATP = O-phospho-L-seryl-[protein] + ADP + H(+). The enzyme catalyses L-threonyl-[protein] + ATP = O-phospho-L-threonyl-[protein] + ADP + H(+). Its function is as follows. Phosphorylates BSK1, BSK3, BSK5, BSK6, BSK8 and BSK11 in vitro. May mediate extracellular signals to regulate transcription in differentiating cells. The chain is Shaggy-related protein kinase iota (ASK9) from Arabidopsis thaliana (Mouse-ear cress).